A 75-amino-acid chain; its full sequence is MSKSTFLFVYIILILGSMVNEIQGQHAMCHEILPETDCGAGSCTALCLQLWRGTGKCVRTNDQKLICLCNFECIV.

The signal sequence occupies residues 1 to 24 (MSKSTFLFVYIILILGSMVNEIQG). Intrachain disulfides connect cysteine 29/cysteine 73, cysteine 38/cysteine 57, cysteine 43/cysteine 67, and cysteine 47/cysteine 69.

This sequence belongs to the DEFL family.

The protein resides in the secreted. This is Putative defensin-like protein 126 (LCR6) from Arabidopsis thaliana (Mouse-ear cress).